Reading from the N-terminus, the 394-residue chain is Ribulose bisphosphate carboxylase large chain (394 aa).

An N6,N6,N6-trimethyllysine modification is found at lysine 5. Positions 114 and 164 each coordinate substrate. Lysine 166 functions as the Proton acceptor in the catalytic mechanism. Lysine 168 serves as a coordination point for substrate. Residues lysine 192, aspartate 194, and glutamate 195 each coordinate Mg(2+). Lysine 192 carries the N6-carboxylysine modification. The active-site Proton acceptor is the histidine 285. The substrate site is built by arginine 286, histidine 318, and serine 370.

It belongs to the RuBisCO large chain family. Type I subfamily. As to quaternary structure, heterohexadecamer of 8 large chains and 8 small chains. Mg(2+) is required as a cofactor.

The protein localises to the plastid. Its subcellular location is the chloroplast. The enzyme catalyses 2 (2R)-3-phosphoglycerate + 2 H(+) = D-ribulose 1,5-bisphosphate + CO2 + H2O. It carries out the reaction D-ribulose 1,5-bisphosphate + O2 = 2-phosphoglycolate + (2R)-3-phosphoglycerate + 2 H(+). Its function is as follows. RuBisCO catalyzes two reactions: the carboxylation of D-ribulose 1,5-bisphosphate, the primary event in carbon dioxide fixation, as well as the oxidative fragmentation of the pentose substrate in the photorespiration process. Both reactions occur simultaneously and in competition at the same active site. This Barclaya longifolia (Orchid lily) protein is Ribulose bisphosphate carboxylase large chain (rbcL).